The chain runs to 364 residues: MAFSTNGSEESELYHAQIHLYKHVYNFVSSMALKSAMELGIADAIHNHGKPMTLSELASSLKLHPSKVNILHRFLRLLTHNGFFAKTIVKGKEGDEEEEIAYSLTPPSKLLISGKPTCLSSIVKGALHPSSLDMWSSSKKWFNEDKEQTLFECATGESFWDFLNKDSESSTLSMFQDAMASDSRMFKLVLQENKRVFEGLESLVDVGGGTGGVTKLIHEIFPHLKCTVFDQPQVVGNLTGNENLNFVGGDMFKSIPSADAVLLKWVLHDWNDEQSLKILKNSKEAISHKGKDGKVIIIDISIDETSDDRGLTELQLDYDLVMLTMFLGKERTKQEWEKLIYDAGFSSYKITPISGFKSLIEVYP.

S-adenosyl-L-methionine contacts are provided by residues V206 to G209, D230, D230 to Q231, D250 to M251, and K264. The active-site Proton acceptor is the H268.

This sequence belongs to the class I-like SAM-binding methyltransferase superfamily. Cation-independent O-methyltransferase family. COMT subfamily. As to quaternary structure, homodimer.

The catalysed reaction is a 4'-hydroxyisoflavone + S-adenosyl-L-methionine = a 4'-methoxyisoflavone + S-adenosyl-L-homocysteine + H(+). The enzyme catalyses (2R,3S)-2,4',7-trihydroxyisoflavanone + S-adenosyl-L-methionine = (2R,3S)-2,7-dihydroxy-4'-methoxyisoflavanone + S-adenosyl-L-homocysteine + H(+). Its function is as follows. 2-hydroxyisoflavanone 4'-O-methyltransferase involved in the biosynthesis of the phytoalexin medicarpin. Has also an in vitro (+)-6a-hydroxymaackiain-3-0-methyltransferase activity, converting the pterocarpan 6a-hydroxymaackiain into pisatin. No activity with di- or trihydroxylated isoflavones, including daidzein and genistein, or with (-)-medicarpin and maackiain. The dual activity for either 3- or 4'-O-methylation depends upon substrate availability. The sequence is that of Isoflavone 4'-O-methyltransferase (HI4'OMT) from Medicago truncatula (Barrel medic).